A 58-amino-acid chain; its full sequence is Proteinase inhibitor PSKP-2 (58 aa).

The region spanning 1–58 is the Kazal-like domain; sequence VIEPDCKKYEGKKCPPDIALVCGTNGREYYNECALCVFIRDSTLKADKAIKIKKWGKC. Disulfide bonds link cysteine 6–cysteine 36, cysteine 14–cysteine 33, and cysteine 22–cysteine 58.

In terms of tissue distribution, skin.

The protein resides in the secreted. In terms of biological role, may have a role in mucosal defense against microbes by interacting directly with their membranes. The protein is Proteinase inhibitor PSKP-2 of Phyllomedusa sauvagei (Sauvage's leaf frog).